We begin with the raw amino-acid sequence, 356 residues long: Probable farnesyl diphosphate synthase DDB_G0278823 (356 aa).

Lys-55, Arg-58, and Gln-94 together coordinate isopentenyl diphosphate. Mg(2+) contacts are provided by Asp-101 and Asp-105. Arg-110 is a binding site for dimethylallyl diphosphate. An isopentenyl diphosphate-binding site is contributed by Arg-111. Lys-203, Thr-204, Gln-243, Lys-260, and Lys-269 together coordinate dimethylallyl diphosphate.

The protein belongs to the FPP/GGPP synthase family. It depends on Mg(2+) as a cofactor.

Its subcellular location is the cytoplasm. It catalyses the reaction isopentenyl diphosphate + dimethylallyl diphosphate = (2E)-geranyl diphosphate + diphosphate. The catalysed reaction is isopentenyl diphosphate + (2E)-geranyl diphosphate = (2E,6E)-farnesyl diphosphate + diphosphate. It participates in isoprenoid biosynthesis; farnesyl diphosphate biosynthesis; farnesyl diphosphate from geranyl diphosphate and isopentenyl diphosphate: step 1/1. It functions in the pathway isoprenoid biosynthesis; geranyl diphosphate biosynthesis; geranyl diphosphate from dimethylallyl diphosphate and isopentenyl diphosphate: step 1/1. Inhibited by aminobisphosphonate drugs (aBP), such as risedronate and alendronate. Functionally, key enzyme in isoprenoid biosynthesis which catalyzes the formation of farnesyl diphosphate (FPP), a sterol precursor. This is Probable farnesyl diphosphate synthase DDB_G0278823 from Dictyostelium discoideum (Social amoeba).